The following is a 98-amino-acid chain: NADH-ubiquinone oxidoreductase chain 4L (98 aa).

A run of 3 helical transmembrane segments spans residues 1–21 (MSLI…GLLM), 26–46 (LMSA…FTTL), and 61–81 (IILL…LVMI).

The protein belongs to the complex I subunit 4L family. Core subunit of respiratory chain NADH dehydrogenase (Complex I) which is composed of 45 different subunits.

Its subcellular location is the mitochondrion inner membrane. The enzyme catalyses a ubiquinone + NADH + 5 H(+)(in) = a ubiquinol + NAD(+) + 4 H(+)(out). In terms of biological role, core subunit of the mitochondrial membrane respiratory chain NADH dehydrogenase (Complex I) which catalyzes electron transfer from NADH through the respiratory chain, using ubiquinone as an electron acceptor. Part of the enzyme membrane arm which is embedded in the lipid bilayer and involved in proton translocation. This chain is NADH-ubiquinone oxidoreductase chain 4L (MT-ND4L), found in Physeter macrocephalus (Sperm whale).